Consider the following 227-residue polypeptide: Cytidylate kinase (227 aa).

Residue 12 to 20 (GPSGAGKGT) coordinates ATP.

Belongs to the cytidylate kinase family. Type 1 subfamily.

Its subcellular location is the cytoplasm. The enzyme catalyses CMP + ATP = CDP + ADP. It catalyses the reaction dCMP + ATP = dCDP + ADP. The chain is Cytidylate kinase from Salmonella arizonae (strain ATCC BAA-731 / CDC346-86 / RSK2980).